Consider the following 214-residue polypeptide: Ribosomal RNA small subunit methyltransferase G (214 aa).

Residues glycine 81, methionine 86, 132–133 (VE), and arginine 147 each bind S-adenosyl-L-methionine.

The protein belongs to the methyltransferase superfamily. RNA methyltransferase RsmG family.

The protein resides in the cytoplasm. The enzyme catalyses guanosine(527) in 16S rRNA + S-adenosyl-L-methionine = N(7)-methylguanosine(527) in 16S rRNA + S-adenosyl-L-homocysteine. Functionally, specifically methylates the N7 position of guanine in position 527 of 16S rRNA. This is Ribosomal RNA small subunit methyltransferase G from Ectopseudomonas mendocina (strain ymp) (Pseudomonas mendocina).